Here is a 677-residue protein sequence, read N- to C-terminus: Bargin (677 aa).

2 stretches are compositionally biased toward low complexity: residues methionine 1–valine 13 and alanine 29–glutamine 39. 2 disordered regions span residues methionine 1–glutamine 39 and serine 168–threonine 190. In terms of domain architecture, BAR spans glutamate 25 to serine 270. Serine 183, serine 270, and serine 272 each carry phosphoserine. One can recognise a Rho-GAP domain in the interval valine 284–phenylalanine 477. Positions serine 504–leucine 577 are disordered. A compositionally biased stretch (pro residues) spans alanine 516 to alanine 530. A phosphoserine mark is found at serine 552 and serine 558. The tract at residues threonine 574–aspartate 677 is mediates non-covalent binding of poly-ubiquitin chains.

As to expression, expressed in brain (at protein level).

Its subcellular location is the cell membrane. It is found in the cytoplasm. It localises to the cytosol. GTPase activating protein (GAP) which specifically converts GTP-bound RAC1 and CDC42 in their inactive GDP-bound form. The GAP activity is enhanced by the non-covalent binding of K-29 and K-48 polyubiquitin chains. The protein is Bargin of Homo sapiens (Human).